A 200-amino-acid polypeptide reads, in one-letter code: Glycerol-3-phosphate acyltransferase (200 aa).

The next 5 membrane-spanning stretches (helical) occupy residues 4–24 (FALC…AVIV), 53–73 (WAAL…VWCG), 80–100 (QFEL…PIFF), 115–135 (IAPI…LVFV), and 138–158 (GYSS…VWWF).

The protein belongs to the PlsY family. In terms of assembly, probably interacts with PlsX.

Its subcellular location is the cell inner membrane. It catalyses the reaction an acyl phosphate + sn-glycerol 3-phosphate = a 1-acyl-sn-glycero-3-phosphate + phosphate. Its pathway is lipid metabolism; phospholipid metabolism. Catalyzes the transfer of an acyl group from acyl-phosphate (acyl-PO(4)) to glycerol-3-phosphate (G3P) to form lysophosphatidic acid (LPA). This enzyme utilizes acyl-phosphate as fatty acyl donor, but not acyl-CoA or acyl-ACP. The sequence is that of Glycerol-3-phosphate acyltransferase from Actinobacillus succinogenes (strain ATCC 55618 / DSM 22257 / CCUG 43843 / 130Z).